The sequence spans 168 residues: Cell division inhibitor SulA (168 aa).

The tract at residues 106–112 (ALLTGNY) is ftsZ binding. The interval 161–168 (KIHSYLYH) is lon protease binding.

Belongs to the SulA family. Interacts with FtsZ. Post-translationally, is rapidly cleaved and degraded by the Lon protease once DNA damage is repaired.

Its function is as follows. Component of the SOS system and an inhibitor of cell division. Accumulation of SulA causes rapid cessation of cell division and the appearance of long, non-septate filaments. In the presence of GTP, binds a polymerization-competent form of FtsZ in a 1:1 ratio, thus inhibiting FtsZ polymerization and therefore preventing it from participating in the assembly of the Z ring. This mechanism prevents the premature segregation of damaged DNA to daughter cells during cell division. This chain is Cell division inhibitor SulA, found in Yersinia pseudotuberculosis serotype O:1b (strain IP 31758).